The primary structure comprises 89 residues: MGFTDETVRFNLDDGDKKQISETLTAVYHSLDEKGYNPINQIVGYVLSGDPAYVPRYNDARNQIRKYERDEIVEELVRYYLQGNGIDIR.

It belongs to the UPF0297 family.

In Streptococcus equi subsp. equi (strain 4047), this protein is UPF0297 protein SEQ_2150.